Consider the following 312-residue polypeptide: Protein phosphatase PTC7 homolog fig (312 aa).

In terms of domain architecture, PPM-type phosphatase spans 42-306 (IQGSSKDQLA…DDITVILASV (265 aa)). Residues aspartate 83, glycine 84, and aspartate 228 each contribute to the Mn(2+) site.

It belongs to the PP2C family. Mg(2+) serves as cofactor. Mn(2+) is required as a cofactor.

The catalysed reaction is O-phospho-L-seryl-[protein] + H2O = L-seryl-[protein] + phosphate. The enzyme catalyses O-phospho-L-threonyl-[protein] + H2O = L-threonyl-[protein] + phosphate. This Drosophila mojavensis (Fruit fly) protein is Protein phosphatase PTC7 homolog fig.